The sequence spans 459 residues: Flavin-containing monooxygenase FMO GS-OX1 (459 aa).

17 to 22 (GAGAAG) is a binding site for FAD. Position 211-216 (211-216 (GNYASG)) interacts with NADP(+).

Belongs to the FMO family. FAD serves as cofactor. In terms of tissue distribution, mainly expressed in leaves. Low levels in flowers and seeds.

The enzyme catalyses a (Z)-omega-(methylsulfanyl)-N-sulfo-alkylhydroximate S-glucoside + NADPH + O2 + H(+) = a (Z)-omega-(methylsulfinyl)-alkyl-glucosinolate + NADP(+) + H2O. Its function is as follows. Catalyzes the conversion of methylthioalkyl glucosinolates into methylsulfinylalkyl glucosinolates. Able to S-oxygenate both desulfo- and intact 4-methylthiobutyl glucosinolates, but no activity with methionine, dihomomethionine or 5-methylthiopentaldoxime. The protein is Flavin-containing monooxygenase FMO GS-OX1 (FMOGS-OX1) of Arabidopsis thaliana (Mouse-ear cress).